A 304-amino-acid chain; its full sequence is MSQSDADALPNVHVRAEVLVQALPHMQRYDEEIVVIKYGGHAMGDRAAAEDFAEDIVLLEQSGLKPVIVHGGGPQIGRMLDRLGIKSEFREGLRVTDEATVEVVEMVLAGSINKQIVGWISAEGGKAIGLCGKDGNMVQARRATRTVVDPDSNIERHVDLGLVGEPERVNRAVLDAVLKAELIPVLAPVAVGSDGQTYNVNADTFAGAIAGALRAKRLLLLTDVPGVLDKDKKLIPELSIEDCRRLIADGTITGGMIPKIETCIYAIEQGVEAVVILDGKVPHAVLLELFTDYGAGTLIRRSGA.

Substrate is bound by residues 72–73, R94, and N199; that span reads GG.

This sequence belongs to the acetylglutamate kinase family. ArgB subfamily.

It is found in the cytoplasm. The catalysed reaction is N-acetyl-L-glutamate + ATP = N-acetyl-L-glutamyl 5-phosphate + ADP. Its pathway is amino-acid biosynthesis; L-arginine biosynthesis; N(2)-acetyl-L-ornithine from L-glutamate: step 2/4. Catalyzes the ATP-dependent phosphorylation of N-acetyl-L-glutamate. The protein is Acetylglutamate kinase of Methylobacterium nodulans (strain LMG 21967 / CNCM I-2342 / ORS 2060).